A 510-amino-acid chain; its full sequence is uncharacterized protein (510 aa).

Positions 1–19 are cleaved as a signal peptide; sequence MLILLILYFLFLQLHIFDS. A helical transmembrane segment spans residues 28–48; that stretch reads IYIHYAICKFIFLLEIYKLIA.

The protein localises to the host membrane. This is an uncharacterized protein from Sulfolobus islandicus rod-shaped virus 1 (SIRV-1).